A 363-amino-acid chain; its full sequence is Aminomethyltransferase (363 aa).

The protein belongs to the GcvT family. In terms of assembly, the glycine cleavage system is composed of four proteins: P, T, L and H.

It carries out the reaction N(6)-[(R)-S(8)-aminomethyldihydrolipoyl]-L-lysyl-[protein] + (6S)-5,6,7,8-tetrahydrofolate = N(6)-[(R)-dihydrolipoyl]-L-lysyl-[protein] + (6R)-5,10-methylene-5,6,7,8-tetrahydrofolate + NH4(+). Its function is as follows. The glycine cleavage system catalyzes the degradation of glycine. The polypeptide is Aminomethyltransferase (Nitrosomonas eutropha (strain DSM 101675 / C91 / Nm57)).